A 56-amino-acid polypeptide reads, in one-letter code: Large ribosomal subunit protein bL32 (56 aa).

The span at 1-16 shows a compositional bias: basic residues; sequence MAVQKSKKSRARRGMR. The segment at 1 to 56 is disordered; it reads MAVQKSKKSRARRGMRRSHDAISGPSLTVDQTSGETHRRHHVTADGYYKGVQVISK. Residues 25-34 show a composition bias toward polar residues; the sequence is PSLTVDQTSG.

It belongs to the bacterial ribosomal protein bL32 family.

The chain is Large ribosomal subunit protein bL32 from Pseudoalteromonas translucida (strain TAC 125).